Reading from the N-terminus, the 1801-residue chain is U3 small nucleolar RNA-associated protein 10 (1801 aa).

The next 2 helical transmembrane spans lie at 102-122 and 136-156; these read LALV…EWLI and ILTF…AILP. The stretch at 581–619 is one HEAT 1 repeat; that stretch reads DVDVQALLPFMLIALADPSERVRSGAVDALANIGKVVDK. The next 2 helical transmembrane spans lie at 939 to 959 and 995 to 1015; these read IQSG…AIVN and ALLL…HSVM. HEAT repeat units lie at residues 1038–1076, 1110–1148, 1244–1282, 1288–1327, and 1756–1794; these read DQTI…AFEH, YSMD…DSLK, TLTT…QSPE, QTRM…KYGK, and LALL…VLGE.

Belongs to the HEATR1/UTP10 family. In terms of assembly, component of the ribosomal small subunit (SSU) processome.

The protein resides in the nucleus. It is found in the nucleolus. Its subcellular location is the membrane. Functionally, involved in nucleolar processing of pre-18S ribosomal RNA. Involved in ribosome biosynthesis. This is U3 small nucleolar RNA-associated protein 10 from Emericella nidulans (strain FGSC A4 / ATCC 38163 / CBS 112.46 / NRRL 194 / M139) (Aspergillus nidulans).